The following is a 480-amino-acid chain: ATP-grasp enzyme ankG (480 aa).

The segment at 1 to 30 (MYQISLKATKSAAEPTSSTDASHDDRQVER) is disordered. A compositionally biased stretch (basic and acidic residues) spans 21 to 30 (ASHDDRQVER).

The catalysed reaction is NK13650 D + L-aspartate + ATP = NK13650 C + AMP + diphosphate + H(+). It catalyses the reaction NK13650 B + L-aspartate + ATP = NK13650 A + AMP + diphosphate + H(+). It functions in the pathway secondary metabolite biosynthesis. ATP-grasp enzyme; part of the ank cluster that mediates the biosynthesis of NK13650 C, a highly modified cyclo-arginine-tyrosine dipeptide. AnkG catalyzes the last step of the pathway via amidation NK13650 D with L-Asp to produce NK13650 C. AnkG also amidates NK13650 B into NK13650 A. Within the pathway, the cyclodipeptide synthase ankA acts as the scaffold-generating enzyme and is responsible for formation of the cyclo-Arg-Tyr diketopiperazine (cRY) from L-Arg and L-Tyr. The ankA product cRY is desaturated by the cytochrome P450 monooxygenase ankB to yield a dehydro-cyclodipeptide intermediate. The FAD-dependent monooxygenase ankC then installs the m-OH, ankD catalyzes the attachment of L-homoserine, and ankE ligates citrate to the ankD product to yield NK13650 B. The O-methyltransferase ankF is responsible for methylation of the C-17 phenol group of NK13650 B to produce NK13650 D. Amidation of NK13650 D with L-Asp by ankG then leads to the production of NK13650 C, whereas amidation of NK13650 B produces NK13650 A. This Aspergillus thermomutatus (Neosartorya pseudofischeri) protein is ATP-grasp enzyme ankG.